The following is a 267-amino-acid chain: MTNNTDKQTLKKLERQILRKTTQVINQYNMIEDGDKIMVCLSGGKDSYCLLEMLLLLQKKAPISFEIIAVNLDQKQPGFPEEVLPNYLKNKGVEFHIIERDTYSIVKRVIPEGKTTCGLCSRMRRGILYDFAEENNVTKVALGHHRDDIIETFFLNLFYNGSIKAMPTKLLSDDKRNIVIRPLAFVSEKETLEYSQLKEFPIIPCNLCGSQDNLQRVFIKDMLNRWEQNNPERKNVIFKALSNISPSQMLDKELFDFINISKDDIQR.

Residues 42–47 carry the PP-loop motif motif; the sequence is SGGKDS. Residues Cys117, Cys120, and Cys208 each coordinate [4Fe-4S] cluster.

It belongs to the TtcA family. In terms of assembly, homodimer. The cofactor is Mg(2+). Requires [4Fe-4S] cluster as cofactor.

The protein localises to the cytoplasm. It carries out the reaction cytidine(32) in tRNA + S-sulfanyl-L-cysteinyl-[cysteine desulfurase] + AH2 + ATP = 2-thiocytidine(32) in tRNA + L-cysteinyl-[cysteine desulfurase] + A + AMP + diphosphate + H(+). It functions in the pathway tRNA modification. In terms of biological role, catalyzes the ATP-dependent 2-thiolation of cytidine in position 32 of tRNA, to form 2-thiocytidine (s(2)C32). The sulfur atoms are provided by the cysteine/cysteine desulfurase (IscS) system. This chain is tRNA-cytidine(32) 2-sulfurtransferase 2, found in Francisella tularensis subsp. holarctica (strain FTNF002-00 / FTA).